Consider the following 400-residue polypeptide: Enoyl-[acyl-carrier-protein] reductase [NADH] (400 aa).

NAD(+) contacts are provided by residues glycine 48–tyrosine 53, phenylalanine 74–glutamate 75, aspartate 111–alanine 112, and leucine 139–alanine 140. Tyrosine 225 contributes to the substrate binding site. Tyrosine 235 acts as the Proton donor in catalysis. NAD(+) contacts are provided by residues lysine 244 and valine 273–threonine 275.

The protein belongs to the TER reductase family. In terms of assembly, monomer.

It catalyses the reaction a 2,3-saturated acyl-[ACP] + NAD(+) = a (2E)-enoyl-[ACP] + NADH + H(+). Its pathway is lipid metabolism; fatty acid biosynthesis. In terms of biological role, involved in the final reduction of the elongation cycle of fatty acid synthesis (FAS II). Catalyzes the reduction of a carbon-carbon double bond in an enoyl moiety that is covalently linked to an acyl carrier protein (ACP). The chain is Enoyl-[acyl-carrier-protein] reductase [NADH] from Aliivibrio fischeri (strain ATCC 700601 / ES114) (Vibrio fischeri).